Reading from the N-terminus, the 403-residue chain is RUN domain-containing protein 3B (403 aa).

The disordered stretch occupies residues 1–20 (MASRSLGGLSGSRGGGKKSL). Residue R13 is modified to Omega-N-methylarginine. The RUN domain occupies 53-185 (DDSSPEFNNF…IDFSFCLKGE (133 aa)). Residues 207-232 (SDSISSDEEELRTFGSSDSEGSTPEN) are disordered. 2 positions are modified to phosphoserine: S211 and S212. Positions 220–231 (FGSSDSEGSTPE) are enriched in polar residues. Positions 296 to 321 (AHKLEKEQLEYIIVELQDQLKSYQSL) form a coiled coil.

The protein belongs to the RUNDC3 family. In terms of assembly, interacts with RAP2A.

The sequence is that of RUN domain-containing protein 3B (Rundc3b) from Rattus norvegicus (Rat).